The primary structure comprises 273 residues: Ribosomal RNA small subunit methyltransferase A (273 aa).

S-adenosyl-L-methionine-binding residues include Asn-18, Leu-20, Gly-45, Glu-66, Asp-91, and Asn-113.

It belongs to the class I-like SAM-binding methyltransferase superfamily. rRNA adenine N(6)-methyltransferase family. RsmA subfamily.

It is found in the cytoplasm. It catalyses the reaction adenosine(1518)/adenosine(1519) in 16S rRNA + 4 S-adenosyl-L-methionine = N(6)-dimethyladenosine(1518)/N(6)-dimethyladenosine(1519) in 16S rRNA + 4 S-adenosyl-L-homocysteine + 4 H(+). In terms of biological role, specifically dimethylates two adjacent adenosines (A1518 and A1519) in the loop of a conserved hairpin near the 3'-end of 16S rRNA in the 30S particle. May play a critical role in biogenesis of 30S subunits. The protein is Ribosomal RNA small subunit methyltransferase A of Salmonella typhimurium (strain LT2 / SGSC1412 / ATCC 700720).